Consider the following 119-residue polypeptide: EF-hand calcium-binding domain-containing protein 2 (119 aa).

Positions Met-1–Ser-22 are cleaved as a signal peptide. Residues Val-82–Leu-117 form the EF-hand domain. The Ca(2+) site is built by Asp-95, Asp-97, Asp-99, and Glu-106.

As to expression, component of the acid-soluble organic matrix of calcified layers of the shell (at protein level).

Its subcellular location is the secreted. This is EF-hand calcium-binding domain-containing protein 2 from Lottia gigantea (Giant owl limpet).